The primary structure comprises 571 residues: Urease subunit alpha (571 aa).

Residues glycine 133–phenylalanine 571 form the Urease domain. Histidine 138, histidine 140, and lysine 221 together coordinate Ni(2+). Lysine 221 carries the post-translational modification N6-carboxylysine. Histidine 223 contacts substrate. Ni(2+)-binding residues include histidine 250 and histidine 276. The Proton donor role is filled by histidine 324. A Ni(2+)-binding site is contributed by aspartate 364.

It belongs to the metallo-dependent hydrolases superfamily. Urease alpha subunit family. As to quaternary structure, heterotrimer of UreA (gamma), UreB (beta) and UreC (alpha) subunits. Three heterotrimers associate to form the active enzyme. The cofactor is Ni cation. In terms of processing, carboxylation allows a single lysine to coordinate two nickel ions.

Its subcellular location is the cytoplasm. The catalysed reaction is urea + 2 H2O + H(+) = hydrogencarbonate + 2 NH4(+). It participates in nitrogen metabolism; urea degradation; CO(2) and NH(3) from urea (urease route): step 1/1. The sequence is that of Urease subunit alpha from Corynebacterium efficiens (strain DSM 44549 / YS-314 / AJ 12310 / JCM 11189 / NBRC 100395).